The following is a 243-amino-acid chain: 1-(5-phosphoribosyl)-5-[(5-phosphoribosylamino)methylideneamino] imidazole-4-carboxamide isomerase (243 aa).

The active-site Proton acceptor is D8. D129 acts as the Proton donor in catalysis.

The protein belongs to the HisA/HisF family.

The protein resides in the cytoplasm. The enzyme catalyses 1-(5-phospho-beta-D-ribosyl)-5-[(5-phospho-beta-D-ribosylamino)methylideneamino]imidazole-4-carboxamide = 5-[(5-phospho-1-deoxy-D-ribulos-1-ylimino)methylamino]-1-(5-phospho-beta-D-ribosyl)imidazole-4-carboxamide. The protein operates within amino-acid biosynthesis; L-histidine biosynthesis; L-histidine from 5-phospho-alpha-D-ribose 1-diphosphate: step 4/9. The polypeptide is 1-(5-phosphoribosyl)-5-[(5-phosphoribosylamino)methylideneamino] imidazole-4-carboxamide isomerase (Geobacter sp. (strain M21)).